The following is a 362-amino-acid chain: Spermidine/putrescine import ATP-binding protein PotA (362 aa).

The ABC transporter domain maps to 6–236 (VELKHVGKRY…PVNHFVADFI (231 aa)). Residue 38 to 45 (GPSGSGKT) coordinates ATP.

Belongs to the ABC transporter superfamily. Spermidine/putrescine importer (TC 3.A.1.11.1) family. As to quaternary structure, the complex is composed of two ATP-binding proteins (PotA), two transmembrane proteins (PotB and PotC) and a solute-binding protein (PotD).

The protein resides in the cell membrane. It carries out the reaction ATP + H2O + polyamine-[polyamine-binding protein]Side 1 = ADP + phosphate + polyamineSide 2 + [polyamine-binding protein]Side 1.. In terms of biological role, part of the ABC transporter complex PotABCD involved in spermidine/putrescine import. Responsible for energy coupling to the transport system. The chain is Spermidine/putrescine import ATP-binding protein PotA from Lacticaseibacillus paracasei (strain ATCC 334 / BCRC 17002 / CCUG 31169 / CIP 107868 / KCTC 3260 / NRRL B-441) (Lactobacillus paracasei).